Reading from the N-terminus, the 406-residue chain is Glucose-6-phosphate isomerase (406 aa).

E259 serves as the catalytic Proton donor. Catalysis depends on residues H284 and K397.

It belongs to the GPI family.

Its subcellular location is the cytoplasm. It carries out the reaction alpha-D-glucose 6-phosphate = beta-D-fructose 6-phosphate. It functions in the pathway carbohydrate biosynthesis; gluconeogenesis. The protein operates within carbohydrate degradation; glycolysis; D-glyceraldehyde 3-phosphate and glycerone phosphate from D-glucose: step 2/4. Functionally, catalyzes the reversible isomerization of glucose-6-phosphate to fructose-6-phosphate. This is Glucose-6-phosphate isomerase from Campylobacter jejuni subsp. jejuni serotype O:2 (strain ATCC 700819 / NCTC 11168).